Consider the following 222-residue polypeptide: Protein THYLAKOID ASSEMBLY 8, chloroplastic (222 aa).

The N-terminal 32 residues, 1–32 (MALSLSQTRPPSLSHSHTLSVIVPKRTFVSIR), are a transit peptide targeting the chloroplast. PPR repeat units follow at residues 115–149 (DLVL…DQRS) and 150–184 (DDKA…GWGS).

Belongs to the PPR family. P subfamily.

It localises to the plastid. The protein localises to the chloroplast thylakoid membrane. In terms of biological role, essential protein required during embryogenesis. Mediates group II organellar RNA introns splicing (e.g. ycf3-2 and trnA). Binds weakly to specific RNA. Promotes the biogenesis of chloroplast thylakoid membranes. This is Protein THYLAKOID ASSEMBLY 8, chloroplastic from Arabidopsis thaliana (Mouse-ear cress).